A 102-amino-acid chain; its full sequence is NADH-quinone oxidoreductase subunit K (102 aa).

Helical transmembrane passes span 6 to 26 (MEHG…GLMV), 30 to 50 (ILFV…AFVV), and 62 to 82 (IMFI…LAIL).

It belongs to the complex I subunit 4L family. In terms of assembly, NDH-1 is composed of 13 different subunits. Subunits NuoA, H, J, K, L, M, N constitute the membrane sector of the complex.

The protein resides in the cell inner membrane. The catalysed reaction is a quinone + NADH + 5 H(+)(in) = a quinol + NAD(+) + 4 H(+)(out). Its function is as follows. NDH-1 shuttles electrons from NADH, via FMN and iron-sulfur (Fe-S) centers, to quinones in the respiratory chain. The immediate electron acceptor for the enzyme in this species is believed to be ubiquinone. Couples the redox reaction to proton translocation (for every two electrons transferred, four hydrogen ions are translocated across the cytoplasmic membrane), and thus conserves the redox energy in a proton gradient. This chain is NADH-quinone oxidoreductase subunit K, found in Azotobacter vinelandii (strain DJ / ATCC BAA-1303).